The sequence spans 152 residues: Small ribosomal subunit protein uS13A (152 aa).

Belongs to the universal ribosomal protein uS13 family. As to quaternary structure, component of the small ribosomal subunit (SSU). Mature yeast ribosomes consist of a small (40S) and a large (60S) subunit. The 40S small subunit contains 1 molecule of ribosomal RNA (18S rRNA) and at least 33 different proteins. The large 60S subunit contains 3 rRNA molecules (25S, 5.8S and 5S rRNA) and at least 46 different proteins.

It localises to the cytoplasm. Component of the ribosome, a large ribonucleoprotein complex responsible for the synthesis of proteins in the cell. The small ribosomal subunit (SSU) binds messenger RNAs (mRNAs) and translates the encoded message by selecting cognate aminoacyl-transfer RNA (tRNA) molecules. The large subunit (LSU) contains the ribosomal catalytic site termed the peptidyl transferase center (PTC), which catalyzes the formation of peptide bonds, thereby polymerizing the amino acids delivered by tRNAs into a polypeptide chain. The nascent polypeptides leave the ribosome through a tunnel in the LSU and interact with protein factors that function in enzymatic processing, targeting, and the membrane insertion of nascent chains at the exit of the ribosomal tunnel. In Schizosaccharomyces pombe (strain 972 / ATCC 24843) (Fission yeast), this protein is Small ribosomal subunit protein uS13A (rps1801).